Here is a 136-residue protein sequence, read N- to C-terminus: Nucleoside diphosphate kinase (136 aa).

Residues Lys-10, Phe-58, Arg-86, Thr-92, Arg-104, and Asn-114 each contribute to the ATP site. His-117 (pros-phosphohistidine intermediate) is an active-site residue.

Belongs to the NDK family. Homotetramer. Requires Mg(2+) as cofactor.

It localises to the cytoplasm. It catalyses the reaction a 2'-deoxyribonucleoside 5'-diphosphate + ATP = a 2'-deoxyribonucleoside 5'-triphosphate + ADP. The catalysed reaction is a ribonucleoside 5'-diphosphate + ATP = a ribonucleoside 5'-triphosphate + ADP. Major role in the synthesis of nucleoside triphosphates other than ATP. The ATP gamma phosphate is transferred to the NDP beta phosphate via a ping-pong mechanism, using a phosphorylated active-site intermediate. The protein is Nucleoside diphosphate kinase of Mycobacterium avium (strain 104).